A 552-amino-acid polypeptide reads, in one-letter code: Urocanate hydratase (552 aa).

NAD(+) is bound by residues 49 to 50 (GG), Gln-127, 173 to 175 (GMG), Asp-193, 239 to 240 (NA), 260 to 264 (QTSAH), 270 to 271 (YI), and Tyr-319. The active site involves Cys-407. Position 489 (Gly-489) interacts with NAD(+).

The protein belongs to the urocanase family. It depends on NAD(+) as a cofactor.

The protein resides in the cytoplasm. The catalysed reaction is 4-imidazolone-5-propanoate = trans-urocanate + H2O. Its pathway is amino-acid degradation; L-histidine degradation into L-glutamate; N-formimidoyl-L-glutamate from L-histidine: step 2/3. In terms of biological role, catalyzes the conversion of urocanate to 4-imidazolone-5-propionate. The chain is Urocanate hydratase from Bacillus cereus (strain B4264).